The following is a 715-amino-acid chain: Probable serine/threonine-protein kinase MARK-B (715 aa).

The segment covering 24–37 has biased composition (low complexity); it reads SCSSNSTTSSSSNS. A disordered region spans residues 24–65; sequence SCSSNSTTSSSSNSPKQNKVSPGYRNKPQQQQHKKGHKMGNY. The 256-residue stretch at 65–320 folds into the Protein kinase domain; sequence YLLGKTIGSG…LDEIKTHVWV (256 aa). ATP-binding positions include 71–79 and Lys-94; that span reads IGSGTSSKV. Asp-187 serves as the catalytic Proton acceptor. Over residues 335–344 the composition is skewed to basic and acidic residues; the sequence is KVSDRLEKEQ. 2 disordered regions span residues 335–399 and 446–530; these read KVSD…IPQN and CSAP…HHST. Low complexity predominate over residues 345–368; that stretch reads QQQTPQHQQTQQQLQPQSQLQQHS. Polar residues predominate over residues 381–399; the sequence is IGSNRPLNQSSPNLTIPQN. Low complexity-rich tracts occupy residues 451–478 and 487–513; these read SPHS…LSVS and SSNP…INTS. Residues 517–527 are compositionally biased toward basic residues; sequence QYHHHHHHQNH. One can recognise a KA1 domain in the interval 666-715; sequence LCPRNETINFEIEVCKVNGMDMYGIKFKRLSGDAWSYSSSCIKIVESLKL.

It belongs to the protein kinase superfamily. CAMK Ser/Thr protein kinase family. SNF1 subfamily.

The catalysed reaction is L-seryl-[protein] + ATP = O-phospho-L-seryl-[protein] + ADP + H(+). It carries out the reaction L-threonyl-[protein] + ATP = O-phospho-L-threonyl-[protein] + ADP + H(+). The polypeptide is Probable serine/threonine-protein kinase MARK-B (mrkB) (Dictyostelium discoideum (Social amoeba)).